Consider the following 1064-residue polypeptide: Leucine--tRNA ligase (1064 aa).

The interval 1–25 (MARAMSETAEPGARTGAADTTVAPT) is disordered. The 'HIGH' region motif lies at 106 to 117 (PYPSGSGLHVGH). The interval 435-456 (GRPGGGTEPADTAGPEAGADPA) is disordered. Residues 831-835 (KMGKS) carry the 'KMSKS' region motif. ATP is bound at residue K834.

The protein belongs to the class-I aminoacyl-tRNA synthetase family.

The protein resides in the cytoplasm. It catalyses the reaction tRNA(Leu) + L-leucine + ATP = L-leucyl-tRNA(Leu) + AMP + diphosphate. This Frankia casuarinae (strain DSM 45818 / CECT 9043 / HFP020203 / CcI3) protein is Leucine--tRNA ligase.